Here is a 296-residue protein sequence, read N- to C-terminus: MFGAFVSHRLWSDSGCTTTCITNSIANYVAFGEQIGFPFKSAQVFIAGPRKAVINIQEDDKVELLKMIVKHNLWVVAHGTYLDVPWSRRSAFVTHFIQQELLICKEVGIKGLVLHLGAVEPELIVEGLKKIKPVEGVVIYLETPHNKHHTYKYSTMEQIKELFLRIRNTRLKQIGLCIDTAHIWSSGVNISSYNDAGQWLRSLENIHSVIPPSHIMFHLNDAATECGSGIDRHASLFEGMIWKSYSHKIKKSGLYCFVEYITRHQCPAILERNLGSSMQLQTALTAEFTTLKSLLK.

A disulfide bridge links C16 with C20. Positions 78, 115, 142, 182, 218, 231, 233, and 271 each coordinate Zn(2+).

The protein belongs to the AP endonuclease 2 family. Zn(2+) serves as cofactor.

It localises to the host nucleus. The protein localises to the host cytoplasm. The protein resides in the virion. Endonuclease of the viral base excision repair system that catalyzes DNA cleavage reaction at the apurinic or apyrimidinic sites (AP sites). Cleaves phosphodiester bonds on the 5' side of AP sites. In addition to endonuclease activity, the AP endonuclease has a proofreading 3'-5' exonuclease activity that is considerably more efficient in the elimination of a mismatch than in that of a correctly paired base. Displays 3'-phosphatase and 3'-repair diesterase activities. The single nucleotide gaps generated by the AP endonuclease are filled by the viral repair DNA polymerase X and the DNA ligase. This chain is Probable AP endonuclease, found in Ornithodoros (relapsing fever ticks).